A 79-amino-acid polypeptide reads, in one-letter code: Acyl carrier protein (79 aa).

The Carrier domain occupies serine 2–serine 77. Position 37 is an O-(pantetheine 4'-phosphoryl)serine (serine 37).

Belongs to the acyl carrier protein (ACP) family. 4'-phosphopantetheine is transferred from CoA to a specific serine of apo-ACP by AcpS. This modification is essential for activity because fatty acids are bound in thioester linkage to the sulfhydryl of the prosthetic group.

Its subcellular location is the cytoplasm. It participates in lipid metabolism; fatty acid biosynthesis. Functionally, carrier of the growing fatty acid chain in fatty acid biosynthesis. The chain is Acyl carrier protein from Methylobacterium radiotolerans (strain ATCC 27329 / DSM 1819 / JCM 2831 / NBRC 15690 / NCIMB 10815 / 0-1).